The following is a 488-amino-acid chain: Ribulose bisphosphate carboxylase large chain (488 aa).

Residues Asn127 and Thr177 each contribute to the substrate site. The Proton acceptor role is filled by Lys179. Lys181 is a substrate binding site. Lys205, Asp207, and Glu208 together coordinate Mg(2+). Lys205 bears the N6-carboxylysine mark. His297 acts as the Proton acceptor in catalysis. Substrate is bound by residues Arg298, His330, and Ser382.

The protein belongs to the RuBisCO large chain family. Type I subfamily. In terms of assembly, heterohexadecamer of 8 large chains and 8 small chains. Mg(2+) serves as cofactor.

The protein localises to the plastid. It is found in the chloroplast. It catalyses the reaction 2 (2R)-3-phosphoglycerate + 2 H(+) = D-ribulose 1,5-bisphosphate + CO2 + H2O. It carries out the reaction D-ribulose 1,5-bisphosphate + O2 = 2-phosphoglycolate + (2R)-3-phosphoglycerate + 2 H(+). In terms of biological role, ruBisCO catalyzes two reactions: the carboxylation of D-ribulose 1,5-bisphosphate, the primary event in carbon dioxide fixation, as well as the oxidative fragmentation of the pentose substrate in the photorespiration process. Both reactions occur simultaneously and in competition at the same active site. The chain is Ribulose bisphosphate carboxylase large chain from Antithamnion sp. (Red alga).